Consider the following 75-residue polypeptide: DNA-directed RNA polymerase subunit omega (75 aa).

It belongs to the RNA polymerase subunit omega family. As to quaternary structure, the RNAP catalytic core consists of 2 alpha, 1 beta, 1 beta' and 1 omega subunit. When a sigma factor is associated with the core the holoenzyme is formed, which can initiate transcription.

The enzyme catalyses RNA(n) + a ribonucleoside 5'-triphosphate = RNA(n+1) + diphosphate. Promotes RNA polymerase assembly. Latches the N- and C-terminal regions of the beta' subunit thereby facilitating its interaction with the beta and alpha subunits. The chain is DNA-directed RNA polymerase subunit omega from Lysinibacillus sphaericus (strain C3-41).